The following is a 103-amino-acid chain: Matrix Gla protein (103 aa).

The signal sequence occupies residues 1-19 (MRSLLLLTVLAALVVAILC). E21 is modified (4-carboxyglutamate). Phosphoserine is present on residues S22, S25, and S28. A Gla domain is found at 51 to 97 (MAKAQERVREQRKPAYELNREACDDYKLCERYAMVYGYNAAYNRYFR). 4-carboxyglutamate occurs at positions 56, 60, 67, and 71. A disulfide bond links C73 and C79.

The protein belongs to the osteocalcin/matrix Gla protein family. In terms of processing, requires vitamin K-dependent gamma-carboxylation for its function.

The protein resides in the secreted. Functionally, associates with the organic matrix of bone and cartilage. Thought to act as an inhibitor of bone formation. In Oryctolagus cuniculus (Rabbit), this protein is Matrix Gla protein (MGP).